Consider the following 543-residue polypeptide: Putative fatty acyl-CoA reductase CG8303 (543 aa).

The disordered stretch occupies residues 1–29 (MAVITEHGGTTSSPPENNNSIGNGKHRVN). The span at 8 to 22 (GGTTSSPPENNNSIG) shows a compositional bias: polar residues. The next 3 helical transmembrane spans lie at 386-406 (LFFYLFHLLPAMVFIIPEKLF), 500-520 (VFNVLYYAGYVVIFAVLYFAL), and 522-542 (LTLGLQIGLTLAVLIWGFLVW).

The protein belongs to the fatty acyl-CoA reductase family.

It is found in the membrane. The catalysed reaction is a long-chain fatty acyl-CoA + 2 NADPH + 2 H(+) = a long-chain primary fatty alcohol + 2 NADP(+) + CoA. It carries out the reaction hexadecanoyl-CoA + 2 NADPH + 2 H(+) = hexadecan-1-ol + 2 NADP(+) + CoA. The enzyme catalyses octadecanoyl-CoA + 2 NADPH + 2 H(+) = octadecan-1-ol + 2 NADP(+) + CoA. Functionally, catalyzes the reduction of C16 or C18 fatty acyl-CoA to fatty alcohols. This is Putative fatty acyl-CoA reductase CG8303 from Drosophila melanogaster (Fruit fly).